The chain runs to 354 residues: Deubiquitination-protection protein dph1 (354 aa).

The Ubiquitin-like domain occupies 1-78 (MTNISLTIKA…SIHLVKTLGQ (78 aa)). The UBA domain maps to 309–353 (PPEERYAEQLSQLNEMGFVDFERNVQALRRSGGNVQGAIESLLSD).

Functionally, protects ubiquitin chains against dissambly by deubiquitinating enzymes thereby promoting protein degradation. This is Deubiquitination-protection protein dph1 (dph1) from Schizosaccharomyces pombe (strain 972 / ATCC 24843) (Fission yeast).